The primary structure comprises 117 residues: LIM and senescent cell antigen-like-containing domain protein 3 (117 aa).

Residues 70–117 enclose the LIM zinc-binding domain; it reads ATCERCKGGFAPAETIVNSNGELYHEQCFVCAQCFQQFPEGLFYEERT.

In terms of tissue distribution, detected in testis.

The protein localises to the cytoplasm. In Homo sapiens (Human), this protein is LIM and senescent cell antigen-like-containing domain protein 3 (LIMS3).